The primary structure comprises 481 residues: MAKNEKQFVEEITKMEDDFPQWYTDVITKTDLVDYAPVKGFMVVKPYGYALWEKMQEFMDKKFKETGHKNCYFPLLIPESLLNKEAEHVEGFAPEVAWVTHGGNKKLEERLCVRPTSETIICTMYAKWLKSYRELPYLYNQWCSVVRWEKSTRPFLRTSEFLWQEGHTLHETAEEAQEETIQQLEVYKALCEELLAMPVVAGQKSESEKFAGGERTYTIEAMMHDGKALQSGTSHFLGQHFTKAFDITFADREGNLANPYHTSWGASTRLIGGLIMTHSDNRGLVLPPRVAPIQVVIVPIAAKKGNVMETVDKIYADLKAKGVAVEVDDRDNYTTGWKFNEWEMKGVPVRVEIGPKDIENNQAMVFRRDTLEKDSMPLEGLADAICDLFDVIHNDMFEKARKHREDNTSIVENMDEFRKALEEKPGFIKTMWCGDAECEAKIKEETGATIRCLPFEQENLGHKCVYCGKEADSMVVMAKAY.

It belongs to the class-II aminoacyl-tRNA synthetase family. ProS type 3 subfamily. In terms of assembly, homodimer.

Its subcellular location is the cytoplasm. It catalyses the reaction tRNA(Pro) + L-proline + ATP = L-prolyl-tRNA(Pro) + AMP + diphosphate. Functionally, catalyzes the attachment of proline to tRNA(Pro) in a two-step reaction: proline is first activated by ATP to form Pro-AMP and then transferred to the acceptor end of tRNA(Pro). This Clostridioides difficile (strain 630) (Peptoclostridium difficile) protein is Proline--tRNA ligase 2.